A 159-amino-acid chain; its full sequence is uncharacterized protein (159 aa).

Residues 6–66 (LSKKDWEIIK…YLRFDKLGYT (61 aa)) form the HTH asnC-type domain. Residues 25–44 (DAEIGRRIGLSKSAVRWRRI) constitute a DNA-binding region (H-T-H motif).

This is an uncharacterized protein from Pyrococcus horikoshii (strain ATCC 700860 / DSM 12428 / JCM 9974 / NBRC 100139 / OT-3).